The primary structure comprises 877 residues: Probable linoleate 9S-lipoxygenase 4 (877 aa).

In terms of domain architecture, PLAT spans 38 to 165; sequence GDFHASLLDG…NYQYERVFFA (128 aa). Residues 168–877 form the Lipoxygenase domain; that stretch reads TYLPSKMPAP…AMGIPNSISI (710 aa). Residues 229–252 form a disordered region; sequence GSQELPYPRRGRTGRAPTKTDPNT. Fe cation contacts are provided by H528, H533, H719, N723, and I877.

This sequence belongs to the lipoxygenase family. Fe cation serves as cofactor.

The enzyme catalyses (9Z,12Z)-octadecadienoate + O2 = (9S)-hydroperoxy-(10E,12Z)-octadecadienoate. The protein operates within lipid metabolism; oxylipin biosynthesis. Functionally, plant lipoxygenase may be involved in a number of diverse aspects of plant physiology including growth and development, pest resistance, and senescence or responses to wounding. Catalyzes the hydroperoxidation of lipids containing a cis,cis-1,4-pentadiene structure. The protein is Probable linoleate 9S-lipoxygenase 4 of Oryza sativa subsp. japonica (Rice).